Consider the following 307-residue polypeptide: Tyrosine recombinase XerC (307 aa).

One can recognise a Core-binding (CB) domain in the interval 9–95 (ETLSLAIDSF…ALRSFLDWQV (87 aa)). Residues 116-296 (HLPKNMDVDE…DFQHLAKVYD (181 aa)) form the Tyr recombinase domain. Residues Arg155, Lys179, His248, Arg251, and His274 contribute to the active site. Residue Tyr283 is the O-(3'-phospho-DNA)-tyrosine intermediate of the active site.

The protein belongs to the 'phage' integrase family. XerC subfamily. As to quaternary structure, forms a cyclic heterotetrameric complex composed of two molecules of XerC and two molecules of XerD, in which XerC interacts with XerD via its C-terminal region, XerD interacts with XerC via its C-terminal region and so on.

It is found in the cytoplasm. With respect to regulation, ftsK may regulate the catalytic switch between XerC and XerD in the heterotetrameric complex during the two steps of the recombination process. Site-specific tyrosine recombinase, which acts by catalyzing the cutting and rejoining of the recombining DNA molecules. Binds cooperatively to specific DNA consensus sequences that are separated from XerD binding sites by a short central region, forming the heterotetrameric XerC-XerD complex that recombines DNA substrates. The complex is essential to convert dimers of the bacterial chromosome into monomers to permit their segregation at cell division. It also contributes to the segregational stability of plasmids. In the complex XerC specifically exchanges the top DNA strands. This Proteus mirabilis protein is Tyrosine recombinase XerC.